Consider the following 185-residue polypeptide: MKIINPILPIIENILGNLTALQAEGKITTQPIERIALQWYESERNILRKTTNTGREVAFRLLKEGQRLKHDDVVFISDELVIAIEILPSEVIVLSPKTLPEMARACYEIGNKHSPLFLDGDEVTLPYDKPMFEWLQAAGFHPQKAERRLSQALRANSAQGHGHSHSHSHDHHGYHHHGDGNWHKH.

The segment at 153–185 (LRANSAQGHGHSHSHSHDHHGYHHHGDGNWHKH) is disordered. The segment covering 162–175 (GHSHSHSHDHHGYH) has biased composition (basic residues). Basic and acidic residues predominate over residues 176 to 185 (HHGDGNWHKH).

It belongs to the UreE family.

The protein localises to the cytoplasm. Its function is as follows. Involved in urease metallocenter assembly. Binds nickel. Probably functions as a nickel donor during metallocenter assembly. The sequence is that of Urease accessory protein UreE from Haemophilus influenzae (strain PittGG).